The sequence spans 319 residues: tRNA dimethylallyltransferase (319 aa).

26 to 33 (GPTAAGKS) serves as a coordination point for ATP. Residue 28 to 33 (TAAGKS) participates in substrate binding. The interaction with substrate tRNA stretch occupies residues 51 to 54 (DSMQ).

It belongs to the IPP transferase family. In terms of assembly, monomer. The cofactor is Mg(2+).

It catalyses the reaction adenosine(37) in tRNA + dimethylallyl diphosphate = N(6)-dimethylallyladenosine(37) in tRNA + diphosphate. Its function is as follows. Catalyzes the transfer of a dimethylallyl group onto the adenine at position 37 in tRNAs that read codons beginning with uridine, leading to the formation of N6-(dimethylallyl)adenosine (i(6)A). In Salinispora tropica (strain ATCC BAA-916 / DSM 44818 / JCM 13857 / NBRC 105044 / CNB-440), this protein is tRNA dimethylallyltransferase.